We begin with the raw amino-acid sequence, 83 residues long: Neurotoxin 3FTx-RI (83 aa).

Residues 1 to 21 (MKTLLLTLVVLTIVCLDLGHT) form the signal peptide. 4 cysteine pairs are disulfide-bonded: C24/C45, C38/C62, C64/C75, and C76/C81.

The protein belongs to the three-finger toxin family. Short-chain subfamily. Type I alpha-neurotoxin sub-subfamily. Expressed by the venom gland.

It is found in the secreted. Functionally, binds to muscle nicotinic acetylcholine receptor (nAChR) and inhibit acetylcholine from binding to the receptor, thereby impairing neuromuscular transmission. The sequence is that of Neurotoxin 3FTx-RI from Bungarus fasciatus (Banded krait).